The chain runs to 141 residues: ATP synthase epsilon chain (141 aa).

It belongs to the ATPase epsilon chain family. As to quaternary structure, F-type ATPases have 2 components, CF(1) - the catalytic core - and CF(0) - the membrane proton channel. CF(1) has five subunits: alpha(3), beta(3), gamma(1), delta(1), epsilon(1). CF(0) has three main subunits: a, b and c.

It is found in the cell inner membrane. Its function is as follows. Produces ATP from ADP in the presence of a proton gradient across the membrane. This is ATP synthase epsilon chain from Pseudomonas fluorescens (strain ATCC BAA-477 / NRRL B-23932 / Pf-5).